The primary structure comprises 343 residues: Follistatin (343 aa).

The N-terminal stretch at 1-28 (MLNQRIHPGMLVLLMFLYHFMEDHTAQA) is a signal peptide. A TB domain is found at 29–102 (GNCWLRQARN…TCENVDCGPG (74 aa)). Cystine bridges form between cysteine 31–cysteine 54, cysteine 41–cysteine 87, cysteine 55–cysteine 90, cysteine 94–cysteine 105, cysteine 99–cysteine 115, cysteine 117–cysteine 149, cysteine 121–cysteine 142, and cysteine 131–cysteine 163. The 24-residue stretch at 93-116 (TCENVDCGPGKKCKMNKKNKPRCV) folds into the Follistatin-like 1 domain. Kazal-like domains are found at residues 99–165 (CGPG…KCKK), 185–240 (NAYC…KCIK), and 263–317 (RGRC…SCNS). Residue asparagine 123 is glycosylated (N-linked (GlcNAc...) asparagine). The region spanning 166 to 189 (TCRDVLCPGSSTCVVDQTNNAYCV) is the Follistatin-like 2 domain. Cystine bridges form between cysteine 191–cysteine 224, cysteine 195–cysteine 217, and cysteine 206–cysteine 238. One can recognise a Follistatin-like 3 domain in the interval 243–267 (SCEDIQCSAGKKCLWDFKVGRGRCA). Intrachain disulfides connect cysteine 269/cysteine 301, cysteine 273/cysteine 294, and cysteine 283/cysteine 315. Residue asparagine 287 is glycosylated (N-linked (GlcNAc...) asparagine). A disordered region spans residues 315-343 (CNSINEDPEEEEEDEDQDYSFPISSILEW). Over residues 320–332 (EDPEEEEEDEDQD) the composition is skewed to acidic residues.

As to quaternary structure, monomer. In terms of tissue distribution, ciliary ganglion neurons. Levels are higher in the iris than the choroid.

It is found in the secreted. In terms of biological role, binds directly to activin and functions as an activin antagonist. Inhibits activin A signaling in the iris and regulates somatostatin phenotype in ciliary ganglion neurons. Specific inhibitor of the biosynthesis and secretion of pituitary follicle stimulating hormone (FSH). In Gallus gallus (Chicken), this protein is Follistatin (FST).